The sequence spans 388 residues: Formate-dependent phosphoribosylglycinamide formyltransferase (388 aa).

N(1)-(5-phospho-beta-D-ribosyl)glycinamide contacts are provided by residues 15-16 (EL) and glutamate 75. Residues arginine 107, lysine 148, 153-158 (SSGKGQ), 188-191 (EEFL), and glutamate 196 each bind ATP. An ATP-grasp domain is found at 112 to 302 (DLASAELALL…EFELHLRAVL (191 aa)). Mg(2+) contacts are provided by glutamate 261 and glutamate 273. N(1)-(5-phospho-beta-D-ribosyl)glycinamide is bound by residues aspartate 280, lysine 350, and 357-358 (RR).

Belongs to the PurK/PurT family. In terms of assembly, homodimer.

The catalysed reaction is N(1)-(5-phospho-beta-D-ribosyl)glycinamide + formate + ATP = N(2)-formyl-N(1)-(5-phospho-beta-D-ribosyl)glycinamide + ADP + phosphate + H(+). It participates in purine metabolism; IMP biosynthesis via de novo pathway; N(2)-formyl-N(1)-(5-phospho-D-ribosyl)glycinamide from N(1)-(5-phospho-D-ribosyl)glycinamide (formate route): step 1/1. Its function is as follows. Involved in the de novo purine biosynthesis. Catalyzes the transfer of formate to 5-phospho-ribosyl-glycinamide (GAR), producing 5-phospho-ribosyl-N-formylglycinamide (FGAR). Formate is provided by PurU via hydrolysis of 10-formyl-tetrahydrofolate. This Prochlorococcus marinus (strain MIT 9313) protein is Formate-dependent phosphoribosylglycinamide formyltransferase.